The following is a 500-amino-acid chain: Glucosylglycerol-phosphate synthase (500 aa).

Belongs to the glycosyltransferase 20 family.

The catalysed reaction is ADP-alpha-D-glucose + sn-glycerol 3-phosphate = 2-O-(alpha-D-glucopyranosyl)-sn-glycerol 3-phosphate + ADP + H(+). Its pathway is glycan metabolism; glucosylglycerol biosynthesis. Functionally, involved in salt tolerance by producing GG-phosphate from ADP-glucose and glycerol-3-phosphate (G3P), an intermediate in the synthesis of the osmolyte glucosylglycerol (GG). This Picosynechococcus sp. (strain ATCC 27264 / PCC 7002 / PR-6) (Agmenellum quadruplicatum) protein is Glucosylglycerol-phosphate synthase (ggpS).